A 112-amino-acid polypeptide reads, in one-letter code: Chaperone NapD (112 aa).

This sequence belongs to the NapD family. As to quaternary structure, interacts with the cytoplasmic NapA precursor.

The protein resides in the cytoplasm. Chaperone for NapA, the catalytic subunit of the periplasmic nitrate reductase. It binds directly and specifically to the twin-arginine signal peptide of NapA, preventing premature interaction with the Tat translocase and premature export. This is Chaperone NapD from Paracoccus pantotrophus (Thiosphaera pantotropha).